A 586-amino-acid chain; its full sequence is Capsid scaffolding protein (586 aa).

Active-site charge relay system residues include His-53, Ser-123, and His-142. The segment covering 251–263 (SEETPENAIKDRS) has biased composition (basic and acidic residues). 4 disordered regions span residues 251–288 (SEET…HVPA), 330–364 (ARRD…DIWP), 458–486 (NKRD…YFPG), and 530–586 (SASN…MMAD). The span at 264–284 (VSTQTAPSFDISESQQPSGQT) shows a compositional bias: polar residues. The segment at 312-331 (EDMVYVPFEKYASLLAASAR) is interaction with pAP. Interaction with major capsid protein regions lie at residues 566–586 (DAQT…MMAD) and 567–586 (AQTK…MMAD).

It belongs to the herpesviridae capsid scaffolding protein family. As to quaternary structure, homomultimer. Interacts with major capsid protein. In terms of assembly, exists in a monomer-dimer equilibrium with the dimer being the active species. Capsid scaffolding protein is cleaved by assemblin after formation of the spherical procapsid. As a result, the capsid obtains its mature, icosahedral shape. Cleavages occur at two or more sites: release (R-site) and maturation (M-site).

The protein resides in the host cytoplasm. It is found in the host nucleus. It carries out the reaction Cleaves -Ala-|-Ser- and -Ala-|-Ala- bonds in the scaffold protein.. Acts as a scaffold protein by binding major capsid protein in the cytoplasm, inducing the nuclear localization of both proteins. Multimerizes in the nucleus such as major capsid protein forms the icosahedral T=16 capsid. Autocatalytic cleavage releases the assembly protein, and subsequently abolishes interaction with major capsid protein. Cleavages products are evicted from the capsid before or during DNA packaging. In terms of biological role, protease that plays an essential role in virion assembly within the nucleus. Catalyzes the cleavage of the assembly protein after formation of the spherical procapsid. By that cleavage, the capsid matures and gains its icosahedral shape. The cleavage sites seem to include -Ala-Ser-, -Ala-Ala-, as well as Ala-Thr bonds. Assemblin and cleavages products are evicted from the capsid before or during DNA packaging. Its function is as follows. Plays a major role in capsid assembly. Acts as a scaffold protein by binding major capsid protein. Multimerizes in the nucleus such as major capsid protein forms the icosahedral T=16 capsid. Cleaved by assemblin after capsid completion. The cleavages products are evicted from the capsid before or during DNA packaging. The polypeptide is Capsid scaffolding protein (Gallus gallus (Chicken)).